We begin with the raw amino-acid sequence, 220 residues long: Large ribosomal subunit protein uL3 (220 aa).

A disordered region spans residues 126 to 158 (GFQGAIKRHGQSRGPMSHGSRYHRRPGSMGMAS).

Belongs to the universal ribosomal protein uL3 family. Part of the 50S ribosomal subunit. Forms a cluster with proteins L14 and L19.

In terms of biological role, one of the primary rRNA binding proteins, it binds directly near the 3'-end of the 23S rRNA, where it nucleates assembly of the 50S subunit. In Macrococcus caseolyticus (strain JCSC5402) (Macrococcoides caseolyticum), this protein is Large ribosomal subunit protein uL3.